Reading from the N-terminus, the 337-residue chain is uncharacterized protein (337 aa).

The span at 42–66 (SHSVSPSPSPSDFSSSSSSSSSSPS) shows a compositional bias: low complexity. The disordered stretch occupies residues 42-68 (SHSVSPSPSPSDFSSSSSSSSSSPSTF). One can recognise an Exonuclease domain in the interval 129 to 304 (FLVIDLEGKV…DDTKNITRVV (176 aa)). Mg(2+) is bound by residues D133, E135, and D234. The active-site Proton acceptor is the E135. E135 contacts AMP. H291 (proton acceptor) is an active-site residue. An AMP-binding site is contributed by H291. D296 serves as a coordination point for Mg(2+).

This is an uncharacterized protein from Arabidopsis thaliana (Mouse-ear cress).